The primary structure comprises 195 residues: Glycerol-3-phosphate acyltransferase (195 aa).

The next 5 helical transmembrane spans lie at 3–23 (EAALLVLCYLLGSIPFSYFFT), 51–71 (GVALLAFLGDLLKGLLAAWIG), 79–99 (LLVICVILAVIGHIYPVFLGF), 111–131 (IILFLMPDVTGILLLIFLAIV), and 153–173 (LAMGKPWSYVVIGILMAALVV).

It belongs to the PlsY family. In terms of assembly, probably interacts with PlsX.

It localises to the cell membrane. The catalysed reaction is an acyl phosphate + sn-glycerol 3-phosphate = a 1-acyl-sn-glycero-3-phosphate + phosphate. It participates in lipid metabolism; phospholipid metabolism. In terms of biological role, catalyzes the transfer of an acyl group from acyl-phosphate (acyl-PO(4)) to glycerol-3-phosphate (G3P) to form lysophosphatidic acid (LPA). This enzyme utilizes acyl-phosphate as fatty acyl donor, but not acyl-CoA or acyl-ACP. The sequence is that of Glycerol-3-phosphate acyltransferase from Syntrophomonas wolfei subsp. wolfei (strain DSM 2245B / Goettingen).